We begin with the raw amino-acid sequence, 420 residues long: Polyketide biosynthesis 3-hydroxy-3-methylglutaryl-ACP synthase PksG (420 aa).

The active-site Proton donor/acceptor is Glu-82. The active-site Acyl-thioester intermediate is Cys-114. His-250 (proton donor/acceptor) is an active-site residue.

The protein belongs to the thiolase-like superfamily. HMG-CoA synthase family.

It localises to the cytoplasm. It carries out the reaction 3-oxobutanoyl-[ACP] + acetyl-[ACP] + H2O = (3S)-hydroxy-3-methylglutaryl-[ACP] + holo-[ACP] + H(+). The protein operates within antibiotic biosynthesis; bacillaene biosynthesis. Functionally, involved in some intermediate steps for the synthesis of the antibiotic polyketide bacillaene which is involved in secondary metabolism. It catalyzes the aldol condensation between the acetyl group attached to the acyl-carrier-protein AcpK (Ac-AcpK) and a beta-ketothioester polyketide intermediate linked to one of the consecutive thiolation domains of PksL. In Bacillus subtilis (strain 168), this protein is Polyketide biosynthesis 3-hydroxy-3-methylglutaryl-ACP synthase PksG (pksG).